The chain runs to 502 residues: ATP synthase subunit alpha (502 aa).

ATP is bound at residue 169–176 (GDRQTGKT).

Belongs to the ATPase alpha/beta chains family. As to quaternary structure, F-type ATPases have 2 components, CF(1) - the catalytic core - and CF(0) - the membrane proton channel. CF(1) has five subunits: alpha(3), beta(3), gamma(1), delta(1), epsilon(1). CF(0) has three main subunits: a(1), b(2) and c(9-12). The alpha and beta chains form an alternating ring which encloses part of the gamma chain. CF(1) is attached to CF(0) by a central stalk formed by the gamma and epsilon chains, while a peripheral stalk is formed by the delta and b chains.

Its subcellular location is the cell membrane. It catalyses the reaction ATP + H2O + 4 H(+)(in) = ADP + phosphate + 5 H(+)(out). Its function is as follows. Produces ATP from ADP in the presence of a proton gradient across the membrane. The alpha chain is a regulatory subunit. This is ATP synthase subunit alpha from Bacillus velezensis (strain DSM 23117 / BGSC 10A6 / LMG 26770 / FZB42) (Bacillus amyloliquefaciens subsp. plantarum).